Consider the following 188-residue polypeptide: Peptidyl-tRNA hydrolase (188 aa).

Residue tyrosine 14 participates in tRNA binding. Histidine 19 acts as the Proton acceptor in catalysis. Positions 64, 66, and 112 each coordinate tRNA.

It belongs to the PTH family. In terms of assembly, monomer.

Its subcellular location is the cytoplasm. The enzyme catalyses an N-acyl-L-alpha-aminoacyl-tRNA + H2O = an N-acyl-L-amino acid + a tRNA + H(+). Functionally, hydrolyzes ribosome-free peptidyl-tRNAs (with 1 or more amino acids incorporated), which drop off the ribosome during protein synthesis, or as a result of ribosome stalling. In terms of biological role, catalyzes the release of premature peptidyl moieties from peptidyl-tRNA molecules trapped in stalled 50S ribosomal subunits, and thus maintains levels of free tRNAs and 50S ribosomes. This chain is Peptidyl-tRNA hydrolase, found in Enterococcus faecalis (strain ATCC 700802 / V583).